We begin with the raw amino-acid sequence, 417 residues long: Cotranscriptional regulator ARB2A (417 aa).

Residues 1–18 (MSISLSSLIFLPIWINMA) form the signal peptide. The N-linked (GlcNAc...) asparagine glycan is linked to Asn-26. The segment at 208-248 (KQKMHKQSSSSDGTDEPAGKRERRDKVSKETKKRRDFYEKY) is disordered. The span at 224-237 (PAGKRERRDKVSKE) shows a compositional bias: basic and acidic residues. Ser-294 acts as the Nucleophile in catalysis. The segment at 398–417 (SSSQKPALTRRSHRIKHEEL) is disordered. The span at 405-417 (LTRRSHRIKHEEL) shows a compositional bias: basic residues. The short motif at 414–417 (HEEL) is the Prevents secretion from ER element.

The protein belongs to the ARB2A family. Interacts with AGO2. Found in a complex, composed of AGO2, CHD7 and ARB2A.

It is found in the nucleus. Its subcellular location is the cytoplasm. The protein localises to the endoplasmic reticulum. Functionally, plays a role in the regulation of alternative splicing, by interacting with AGO2 and CHD7. Seems to be required for stabilizing protein-protein interactions at the chromatin-spliceosome interface. May have hydrolase activity. This Mus musculus (Mouse) protein is Cotranscriptional regulator ARB2A (Arb2a).